The sequence spans 355 residues: uncharacterized protein (355 aa).

ATP is bound at residue 132–139; the sequence is GPPGCGKT.

It belongs to the AAA ATPase family.

It is found in the mitochondrion. This is an uncharacterized protein from Schizosaccharomyces pombe (strain 972 / ATCC 24843) (Fission yeast).